Reading from the N-terminus, the 140-residue chain is MKAFIVLVALALAAPALGRTMDRCSLAREMSNLGVPRDQLARWACIAEHESSYRTGVVGPENYNGSNDYGIFQINDYYWCAPPSGRFSYNECGLSCNALLTDDITHSVRCAQKVLSQQGWSAWSTWHYCSGWLPSIDDCF.

The signal sequence occupies residues 1 to 18 (MKAFIVLVALALAAPALG). In terms of domain architecture, C-type lysozyme spans 19–140 (RTMDRCSLAR…GWLPSIDDCF (122 aa)). 4 cysteine pairs are disulfide-bonded: Cys-24-Cys-139, Cys-45-Cys-129, Cys-80-Cys-96, and Cys-92-Cys-110. Residues Glu-50 and Asp-68 contribute to the active site.

This sequence belongs to the glycosyl hydrolase 22 family. As to expression, found in the midgut.

The enzyme catalyses Hydrolysis of (1-&gt;4)-beta-linkages between N-acetylmuramic acid and N-acetyl-D-glucosamine residues in a peptidoglycan and between N-acetyl-D-glucosamine residues in chitodextrins.. Functionally, unlikely to play an active role in the humoral immune defense. May have a function in the digestion of bacteria in the food. This is Lysozyme B (LysB) from Drosophila melanogaster (Fruit fly).